A 3471-amino-acid polypeptide reads, in one-letter code: Abnormal spindle-like microcephaly-associated protein homolog (3471 aa).

The disordered stretch occupies residues 1 to 26 (MANRRVGRGCWEVSPTERRPPAAEEE). Phosphoserine is present on residues Ser274, Ser277, Ser361, Ser386, and Ser419. Residues 555 to 564 (EVTPSSTTAS) are compositionally biased toward polar residues. A disordered region spans residues 555–576 (EVTPSSTTASVARKRKSDGSME). Residue Ser599 is modified to Phosphoserine. Positions 914-1050 (KASKEILLAF…LLWKIAFAFQ (137 aa)) constitute a Calponin-homology (CH) 1 domain. The stretch at 1051 to 1072 (VDISLNLDQLKEEIAFLKHTKS) forms a coiled coil. Ser1097 is subject to Phosphoserine. In terms of domain architecture, Calponin-homology (CH) 2 spans 1104–1255 (SENIKLLMDW…YLSFLCARLL (152 aa)). IQ domains lie at 1341-1372 (QNKA…IILQ), 1387-1416 (YLWA…MLKS), 1576-1607 (LKKT…VIIQ), 1599-1628 (MKKA…KTRS), 1626-1655 (TRSA…SVIK), 1649-1678 (ILTS…ATIK), 1722-1751 (MRES…AVIS), 1745-1776 (QRKA…IVIQ), 1795-1824 (VKKA…AALK), 1818-1847 (QSIA…SIIK), 1868-1897 (TKAA…AALK), 1891-1922 (EHQA…LVIQ), 1941-1972 (LRHA…IIIQ), 1964-1995 (QHKC…LLIQ), 2014-2043 (TKAA…AAVT), 2037-2068 (CNKA…IIIQ), 2087-2118 (LKKT…TFIK), 2110-2141 (MHRA…IVIQ), 2160-2191 (ILKA…TLIQ), 2183-2212 (MQIA…ITKT), 2233-2264 (LRHS…TLIQ), 2256-2287 (MHIA…IWIQ), 2305-2336 (VQNA…TFIQ), 2378-2409 (QRHS…TLIQ), 2401-2432 (MHSS…IFVQ), 2451-2482 (LRKS…VLIQ), 2524-2555 (QWHS…IIIQ), 2659-2690 (RTQA…TLIQ), 2682-2713 (MHRA…VVIQ), 2732-2761 (VQKS…EKMA), 2853-2884 (QKRA…VVLQ), 2903-2932 (IRSS…STIK), 2926-2957 (IKNS…KIQA), 2948-2979 (KVKA…KIIQ), 3023-3054 (RHRA…LVIQ), 3073-3104 (FKKS…RLLH), 3134-3163 (QVNS…SIKK), 3175-3204 (QNRA…GIIK), and 3198-3229 (FTSG…IRLS).

It localises to the cytoplasm. The protein resides in the cytoskeleton. It is found in the spindle. Its subcellular location is the nucleus. Probable role in mitotic spindle regulation and coordination of mitotic processes. May have a preferential role in regulating neurogenesis. This chain is Abnormal spindle-like microcephaly-associated protein homolog (ASPM), found in Pongo pygmaeus (Bornean orangutan).